An 84-amino-acid chain; its full sequence is Acetylcholine receptor subunit alpha (84 aa).

Cystine bridges form between Cys7–Cys21 and Cys71–Cys72. Asn20 is a glycosylation site (N-linked (GlcNAc...) asparagine).

This sequence belongs to the ligand-gated ion channel (TC 1.A.9) family. Acetylcholine receptor (TC 1.A.9.1) subfamily. Alpha-1/CHRNA1 sub-subfamily. In terms of assembly, one of the alpha chains that assemble within the acetylcholine receptor, a pentamer of two alpha chains, a beta, a delta, and a gamma (in immature muscle) or epsilon (in mature muscle) chains. The muscle heteropentamer composed of alpha-1, beta-1, delta, epsilon subunits interacts with the alpha-conotoxin ImII.

The protein resides in the postsynaptic cell membrane. It localises to the cell membrane. It carries out the reaction K(+)(in) = K(+)(out). The enzyme catalyses Na(+)(in) = Na(+)(out). Functionally, upon acetylcholine binding, the AChR responds by an extensive change in conformation that affects all subunits and leads to opening of an ion-conducting channel across the plasma membrane. This is Acetylcholine receptor subunit alpha (CHRNA1) from Crocidura russula (Greater white-toothed shrew).